Consider the following 212-residue polypeptide: Ribosomal RNA small subunit methyltransferase G (212 aa).

S-adenosyl-L-methionine-binding positions include Gly73, Phe78, 124–125, and Arg137; that span reads IE.

The protein belongs to the methyltransferase superfamily. RNA methyltransferase RsmG family.

It is found in the cytoplasm. Functionally, specifically methylates the N7 position of a guanine in 16S rRNA. In Karelsulcia muelleri (strain GWSS) (Sulcia muelleri), this protein is Ribosomal RNA small subunit methyltransferase G.